The following is a 442-amino-acid chain: D-serine dehydratase 1 (442 aa).

K118 carries the N6-(pyridoxal phosphate)lysine modification.

The protein belongs to the serine/threonine dehydratase family. DsdA subfamily. In terms of assembly, monomer. It depends on pyridoxal 5'-phosphate as a cofactor.

It catalyses the reaction D-serine = pyruvate + NH4(+). The polypeptide is D-serine dehydratase 1 (Escherichia coli (strain UTI89 / UPEC)).